Reading from the N-terminus, the 271-residue chain is Phosphatidylinositol transfer protein beta isoform (271 aa).

At Lys-215 the chain carries N6-acetyllysine. Ser-262 carries the phosphoserine modification.

The protein belongs to the PtdIns transfer protein family. PI transfer class I subfamily. Constitutive phosphorylation of Ser-262 has no effect on phospholipid transfer activity but is required for Golgi targeting. As to expression, expressed abundantly in brain, kidney, liver, and lung, but in a lesser amount in testis.

It is found in the golgi apparatus. It localises to the golgi apparatus membrane. The protein localises to the endoplasmic reticulum membrane. The enzyme catalyses a 1,2-diacyl-sn-glycero-3-phosphocholine(in) = a 1,2-diacyl-sn-glycero-3-phosphocholine(out). It carries out the reaction a 1,2-diacyl-sn-glycero-3-phospho-(1D-myo-inositol)(in) = a 1,2-diacyl-sn-glycero-3-phospho-(1D-myo-inositol)(out). The catalysed reaction is an N-(acyl)-sphingosylphosphocholine(in) = an N-(acyl)-sphingosylphosphocholine(out). Phosphatidylinositol transfer activity is inhibited by N-ethylmaleimide. Its function is as follows. Catalyzes the transfer of phosphatidylinositol between membranes. Also catalyzes the transfer of phosphatidylcholine and sphingomyelin between membranes. Required for COPI-mediated retrograde transport from the Golgi to the endoplasmic reticulum; phosphatidylinositol and phosphatidylcholine transfer activity is essential for this function. The protein is Phosphatidylinositol transfer protein beta isoform (Pitpnb) of Rattus norvegicus (Rat).